Here is a 342-residue protein sequence, read N- to C-terminus: MLERLQEICEEARAALNGACSLEELNEIRIRYLGKKGELTRVLRSMGSLSAEERPRIGQAANEIRDFIEKELAARTAALKEMVKEQKLRGDKIDVTLPGMPLPGGGKHPLTLVLEEIQRIFLGLGYSIVEGPEVETDYYNFEALNLPKDHPARDMQDTFFIGGEILLRTHTSPVQVRTMEKTAPGLPVKIIVPGKVYRRDDDATHSPMFHQVEGLAVDRRITFSDLKGTLDLFAREMFGPQTRTRFRPSYFPFTEPSAEVDISCVMCGGRGCRVCSQTGWLEILGSGMVHPRVLEVSGYNSEEVTGFAFGMGVERIAMLKYGIDDMRLLFENDLRFLQQFRS.

Position 255 (glutamate 255) interacts with Mg(2+).

It belongs to the class-II aminoacyl-tRNA synthetase family. Phe-tRNA synthetase alpha subunit type 1 subfamily. Tetramer of two alpha and two beta subunits. Mg(2+) serves as cofactor.

It localises to the cytoplasm. The catalysed reaction is tRNA(Phe) + L-phenylalanine + ATP = L-phenylalanyl-tRNA(Phe) + AMP + diphosphate + H(+). The sequence is that of Phenylalanine--tRNA ligase alpha subunit from Pelotomaculum thermopropionicum (strain DSM 13744 / JCM 10971 / SI).